A 415-amino-acid polypeptide reads, in one-letter code: Protein-lysine N-trimethyltransferase SMYD5 (415 aa).

Residues 20-351 form the SET domain; the sequence is NCVDVRFINN…PGEEICISYL (332 aa). An MYND-type zinc finger spans residues 95-135; the sequence is PHPELCKVRPDRHQACPQCQVMYCSSECRQAAMDQYHKILC. An S-adenosyl-L-methionine-binding site is contributed by tyrosine 350. A disordered region spans residues 388 to 415; it reads DMTSEDEEEVEGEGETEGEDMEDEMTDV.

This sequence belongs to the class V-like SAM-binding methyltransferase superfamily. As to expression, expressed at high levels in the ovary and at lower levels in the fin, testis and brain.

The protein localises to the cytoplasm. The catalysed reaction is L-lysyl-[protein] + 3 S-adenosyl-L-methionine = N(6),N(6),N(6)-trimethyl-L-lysyl-[protein] + 3 S-adenosyl-L-homocysteine + 3 H(+). It carries out the reaction L-lysyl(20)-[histone H4] + 3 S-adenosyl-L-methionine = N(6),N(6),N(6)-trimethyl-L-lysyl(20)-[histone H4] + 3 S-adenosyl-L-homocysteine + 3 H(+). It catalyses the reaction L-lysyl(36)-[histone H3] + 3 S-adenosyl-L-methionine = N(6),N(6),N(6)-trimethyl-L-lysyl(36)-[histone H3] + 3 S-adenosyl-L-homocysteine + 3 H(+). In terms of biological role, protein-lysine N-trimethyltransferase that specifically catalyzes trimethylation of 'Lys-22' of the RPL40/eL40 subunit of the 60S ribosome, thereby promoting translation elongation and protein synthesis. May also act as a histone methyltransferase in the context of histone octamers, but not on nucleosome substrates: trimethylates 'Lys-36' of histone H3 and 'Lys-20' of histone H4 to form H3K36me3 and H4K20me3, respectively. The histone methyltransferase activity, which is independent of its SET domain, is however unsure in vivo. Plays a crucial role in hematopoiesis during embryogenesis by negatively regulating expression of genes related to both primitive and definitive hematopoiesis. This chain is Protein-lysine N-trimethyltransferase SMYD5, found in Danio rerio (Zebrafish).